The following is a 257-amino-acid chain: Hydroxyacylglutathione hydrolase (257 aa).

Zn(2+) is bound by residues His-54, His-56, Asp-58, His-59, His-113, Asp-137, and His-175.

The protein belongs to the metallo-beta-lactamase superfamily. Glyoxalase II family. As to quaternary structure, monomer. Requires Zn(2+) as cofactor.

It carries out the reaction an S-(2-hydroxyacyl)glutathione + H2O = a 2-hydroxy carboxylate + glutathione + H(+). It functions in the pathway secondary metabolite metabolism; methylglyoxal degradation; (R)-lactate from methylglyoxal: step 2/2. Thiolesterase that catalyzes the hydrolysis of S-D-lactoyl-glutathione to form glutathione and D-lactic acid. The sequence is that of Hydroxyacylglutathione hydrolase from Crocosphaera subtropica (strain ATCC 51142 / BH68) (Cyanothece sp. (strain ATCC 51142)).